An 85-amino-acid chain; its full sequence is Granaticin polyketide synthase acyl carrier protein (85 aa).

The region spanning 3-81 (RLTLDGLRTI…VLLDLVNGAQ (79 aa)) is the Carrier domain. S41 bears the O-(pantetheine 4'-phosphoryl)serine mark.

4'-phosphopantetheine is transferred from CoA to a specific serine of the apo-ACP-like protein.

Its pathway is antibiotic biosynthesis; granaticin biosynthesis. In terms of biological role, acyl carrier protein. This Streptomyces violaceoruber protein is Granaticin polyketide synthase acyl carrier protein.